Reading from the N-terminus, the 368-residue chain is Phosphate acyltransferase (368 aa).

Residues 335-368 (VSLGDGEHDAGGAGHTGPAAGQHAEPPAAQSSKA) form a disordered region.

This sequence belongs to the PlsX family. Homodimer. Probably interacts with PlsY.

The protein resides in the cytoplasm. It catalyses the reaction a fatty acyl-[ACP] + phosphate = an acyl phosphate + holo-[ACP]. It participates in lipid metabolism; phospholipid metabolism. Its function is as follows. Catalyzes the reversible formation of acyl-phosphate (acyl-PO(4)) from acyl-[acyl-carrier-protein] (acyl-ACP). This enzyme utilizes acyl-ACP as fatty acyl donor, but not acyl-CoA. The chain is Phosphate acyltransferase from Burkholderia vietnamiensis (strain G4 / LMG 22486) (Burkholderia cepacia (strain R1808)).